A 134-amino-acid chain; its full sequence is MARVTVEDCIDKVENRFELVLLASHRARLISQGASITIDRDNDKNPVVALREIADETLSPDDLKEDLIHSLQKHVEVDEPEPDPASMIAAGGVAAADSEEQDDLPETITFDQMSEEELLAGIEGLVPPEKSDDY.

This sequence belongs to the RNA polymerase subunit omega family. The RNAP catalytic core consists of 2 alpha, 1 beta, 1 beta' and 1 omega subunit. When a sigma factor is associated with the core the holoenzyme is formed, which can initiate transcription.

The catalysed reaction is RNA(n) + a ribonucleoside 5'-triphosphate = RNA(n+1) + diphosphate. Its function is as follows. Promotes RNA polymerase assembly. Latches the N- and C-terminal regions of the beta' subunit thereby facilitating its interaction with the beta and alpha subunits. The sequence is that of DNA-directed RNA polymerase subunit omega from Rhizobium etli (strain CIAT 652).